The following is a 46-amino-acid chain: Viscotoxin-1-PS (46 aa).

3 disulfide bridges follow: Cys-3–Cys-40, Cys-4–Cys-32, and Cys-16–Cys-26.

Belongs to the plant thionin (TC 1.C.44) family.

The protein localises to the secreted. Its function is as follows. Thionins are small plant proteins which are toxic to animal cells. They seem to exert their toxic effect at the level of the cell membrane. Their precise function is not known. The protein is Viscotoxin-1-PS (THI2.4) of Viscum album (European mistletoe).